Consider the following 190-residue polypeptide: Frizzled-6 (190 aa).

One can recognise an FZ domain in the interval 1–20 (FGFAWPEELECSRLVNCDET). The Extracellular portion of the chain corresponds to 1–89 (FGFAWPEELE…NYELDVAKSF (89 aa)). A helical membrane pass occupies residues 90 to 110 (IGIVSIFCLCATLFTFLTFLI). The Cytoplasmic segment spans residues 111-121 (DVKRFRYPERP). Residues 122–142 (IIYYSVCYSIVSLMYFIGFLL) traverse the membrane as a helical segment. The Extracellular portion of the chain corresponds to 143–169 (GNRTACNKADDKLEIGETVVLGSQNKA). A glycan (N-linked (GlcNAc...) asparagine) is linked at N144. A helical transmembrane segment spans residues 170–190 (CTVLFMVLYFFTMAGTIWWVI).

It belongs to the G-protein coupled receptor Fz/Smo family.

Its subcellular location is the membrane. The protein localises to the cell membrane. It is found in the cell surface. It localises to the apical cell membrane. The protein resides in the cytoplasmic vesicle membrane. In terms of biological role, receptor for Wnt proteins. Most of frizzled receptors are coupled to the beta-catenin canonical signaling pathway, which leads to the activation of disheveled proteins, inhibition of GSK-3 kinase, nuclear accumulation of beta-catenin and activation of Wnt target genes. A second signaling pathway involving PKC and calcium fluxes has been seen for some family members, but it is not yet clear if it represents a distinct pathway or if it can be integrated in the canonical pathway, as PKC seems to be required for Wnt-mediated inactivation of GSK-3 kinase. Both pathways seem to involve interactions with G-proteins. Activation by Wnt5A stimulates PKC activity via a G-protein-dependent mechanism. Involved in transduction and intercellular transmission of polarity information during tissue morphogenesis and/or in differentiated tissues. Together with FZD3, may be involved in the neural tube closure and plays a role in the regulation of the establishment of planar cell polarity (PCP), particularly in the orientation of asymmetric bundles of stereocilia on the apical faces of a subset of auditory and vestibular sensory cells located in the inner ear. This is Frizzled-6 (FZD6) from Gallus gallus (Chicken).